The chain runs to 140 residues: MLEIDNQTPLESDFLSLEKIANVLAPTQTIELVLVSDETMREINRDSRGCDYATDVLSFPLEAIPHTPLGSVVINMPLAQESALKLGHRLEDEIALLFIHGVLHLLGYDHEKDKGEQRQKESELIKTFNLPLSLIERAQD.

Zn(2+) is bound by residues His100, His104, and His110.

The protein belongs to the endoribonuclease YbeY family. Requires Zn(2+) as cofactor.

The protein localises to the cytoplasm. Functionally, single strand-specific metallo-endoribonuclease involved in late-stage 70S ribosome quality control and in maturation of the 3' terminus of the 16S rRNA. This chain is Endoribonuclease YbeY, found in Helicobacter pylori (strain Shi470).